The primary structure comprises 150 residues: MKVIFLQDVKGKGKKGDVKEVPTGYAQNFLIKNGYAKEANKGSMSALAGQKKAQEKHEAEVLAQAKEMQAFLEDEKTVVEIKAKAGEDSRLFGSIPSKQIAEALNKQYNVKLDKRKIELANPIRSLGYTNVPVKLHHEVTAKIKVHVVAE.

This sequence belongs to the bacterial ribosomal protein bL9 family.

Its function is as follows. Binds to the 23S rRNA. This is Large ribosomal subunit protein bL9 from Enterococcus faecalis (strain ATCC 700802 / V583).